The primary structure comprises 181 residues: Mitochondrial pyruvate carrier-like protein (181 aa).

Helical transmembrane passes span 23–42 (YLAS…PLAA) and 52–74 (IISG…FAYR). Positions 125–154 (TGSVDSSATSTGSVDSSATSTGSVDSSAAT) are disordered.

Belongs to the mitochondrial pyruvate carrier (MPC) (TC 2.A.105) family.

The protein resides in the mitochondrion inner membrane. In terms of biological role, may mediate the uptake of pyruvate into mitochondria. This chain is Mitochondrial pyruvate carrier-like protein, found in Bos taurus (Bovine).